Consider the following 750-residue polypeptide: Photosystem I P700 chlorophyll a apoprotein A1 (750 aa).

8 helical membrane-spanning segments follow: residues 70–93 (VFSAHFGQLSIIFLWLSGMYFHGA), 156–179 (LYCTAIGALVFAALMLFAGWFHYH), 195–219 (LNHHLAGLLGLGSLSWAGHQVHVSL), 291–309 (IAHHHLAIAILFLIAGHMY), 346–369 (WHAQLSLNLAMLGSLTIIVAHHMY), 385–411 (LSLFTHHMWIGGFLIVGAAAHAAIFMV), 433–455 (AIISHLNWVCIFLGFHSFGLYIH), and 531–549 (FLVHHIHAFTIHVTVLILL). [4Fe-4S] cluster is bound by residues Cys-573 and Cys-582. A run of 2 helical transmembrane segments spans residues 589-610 (HVFLGLFWMYNAISVVIFHFSW) and 664-686 (LSAYGLFFLGAHFVWAFSLMFLF). His-675 serves as a coordination point for chlorophyll a'. 2 residues coordinate chlorophyll a: Met-683 and Tyr-691. Trp-692 serves as a coordination point for phylloquinone. The helical transmembrane segment at 724–744 (AVGVTHYLLGGIATTWAFFLA) threads the bilayer.

It belongs to the PsaA/PsaB family. The PsaA/B heterodimer binds the P700 chlorophyll special pair and subsequent electron acceptors. PSI consists of a core antenna complex that captures photons, and an electron transfer chain that converts photonic excitation into a charge separation. The eukaryotic PSI reaction center is composed of at least 11 subunits. It depends on P700 is a chlorophyll a/chlorophyll a' dimer, A0 is one or more chlorophyll a, A1 is one or both phylloquinones and FX is a shared 4Fe-4S iron-sulfur center. as a cofactor.

The protein resides in the plastid. Its subcellular location is the chloroplast thylakoid membrane. The enzyme catalyses reduced [plastocyanin] + hnu + oxidized [2Fe-2S]-[ferredoxin] = oxidized [plastocyanin] + reduced [2Fe-2S]-[ferredoxin]. In terms of biological role, psaA and PsaB bind P700, the primary electron donor of photosystem I (PSI), as well as the electron acceptors A0, A1 and FX. PSI is a plastocyanin-ferredoxin oxidoreductase, converting photonic excitation into a charge separation, which transfers an electron from the donor P700 chlorophyll pair to the spectroscopically characterized acceptors A0, A1, FX, FA and FB in turn. Oxidized P700 is reduced on the lumenal side of the thylakoid membrane by plastocyanin. This chain is Photosystem I P700 chlorophyll a apoprotein A1, found in Olimarabidopsis pumila (Dwarf rocket).